The following is a 495-amino-acid chain: Cytochrome P450 monooxygenase 88 (495 aa).

A helical membrane pass occupies residues 2–22 (FLQIVTSVLATGLLYALISVL). 2 N-linked (GlcNAc...) asparagine glycosylation sites follow: N25 and N198. Residue C428 participates in heme binding.

Belongs to the cytochrome P450 family. It depends on heme as a cofactor.

The protein localises to the membrane. It participates in secondary metabolite biosynthesis. In terms of biological role, cytochrome P450 monooxygenase that is able to use 4-ethoxybenzoic acid as a substrate for oxidation. The sequence is that of Cytochrome P450 monooxygenase 88 from Postia placenta (strain ATCC 44394 / Madison 698-R) (Brown rot fungus).